A 213-amino-acid chain; its full sequence is Probable lipid phosphate phosphatase beta (213 aa).

A run of 5 helical transmembrane segments spans residues 30–50, 67–87, 118–138, 158–178, and 181–201; these read PFLPPFVLLLLEISADFRFSF, VPFLLGLLFDLIFVGIVKLIF, VFFVAASVHFFSAAAEASMTG, VEVVVVVWIWATVTAISRILL, and HYVLDVAAGAFLGIVEALFAL.

Belongs to the PA-phosphatase related phosphoesterase family.

Its subcellular location is the membrane. This chain is Probable lipid phosphate phosphatase beta (LPPB), found in Arabidopsis thaliana (Mouse-ear cress).